The sequence spans 345 residues: UDP-N-acetylenolpyruvoylglucosamine reductase (345 aa).

Residues 16-186 form the FAD-binding PCMH-type domain; the sequence is LPAYASNVIS…VSVGIKLMKS (171 aa). Residue R162 is part of the active site. S232 serves as the catalytic Proton donor. E328 is an active-site residue.

It belongs to the MurB family. FAD serves as cofactor.

The protein resides in the cytoplasm. It catalyses the reaction UDP-N-acetyl-alpha-D-muramate + NADP(+) = UDP-N-acetyl-3-O-(1-carboxyvinyl)-alpha-D-glucosamine + NADPH + H(+). It participates in cell wall biogenesis; peptidoglycan biosynthesis. In terms of biological role, cell wall formation. In Yersinia pestis, this protein is UDP-N-acetylenolpyruvoylglucosamine reductase.